The following is a 360-amino-acid chain: UDP-N-acetylglucosamine--N-acetylmuramyl-(pentapeptide) pyrophosphoryl-undecaprenol N-acetylglucosamine transferase (360 aa).

UDP-N-acetyl-alpha-D-glucosamine-binding positions include 14-16 (TGG), Asn131, Arg167, Ser195, Ile249, and Gln294.

It belongs to the glycosyltransferase 28 family. MurG subfamily.

The protein localises to the cell inner membrane. It carries out the reaction di-trans,octa-cis-undecaprenyl diphospho-N-acetyl-alpha-D-muramoyl-L-alanyl-D-glutamyl-meso-2,6-diaminopimeloyl-D-alanyl-D-alanine + UDP-N-acetyl-alpha-D-glucosamine = di-trans,octa-cis-undecaprenyl diphospho-[N-acetyl-alpha-D-glucosaminyl-(1-&gt;4)]-N-acetyl-alpha-D-muramoyl-L-alanyl-D-glutamyl-meso-2,6-diaminopimeloyl-D-alanyl-D-alanine + UDP + H(+). Its pathway is cell wall biogenesis; peptidoglycan biosynthesis. Cell wall formation. Catalyzes the transfer of a GlcNAc subunit on undecaprenyl-pyrophosphoryl-MurNAc-pentapeptide (lipid intermediate I) to form undecaprenyl-pyrophosphoryl-MurNAc-(pentapeptide)GlcNAc (lipid intermediate II). This chain is UDP-N-acetylglucosamine--N-acetylmuramyl-(pentapeptide) pyrophosphoryl-undecaprenol N-acetylglucosamine transferase, found in Polaromonas naphthalenivorans (strain CJ2).